The primary structure comprises 1210 residues: Histone-lysine N-methyltransferase EHMT2 (1210 aa).

A compositionally biased stretch (low complexity) spans 1–23 (MAAAAGAAAAAAAEGEAPAEMGA). Disordered stretches follow at residues 1 to 262 (MAAA…LEEW) and 280 to 386 (DERV…EYME). At A2 the chain carries N-acetylalanine. Basic and acidic residues predominate over residues 26–38 (LEKETRGATERVH). S40 is subject to Phosphoserine. T44 is subject to Phosphothreonine. S47 carries the phosphoserine modification. A compositionally biased stretch (low complexity) spans 105–128 (GRILLGHATKSFPSSPSKGGSCPS). S140 bears the Phosphoserine mark. Over residues 155 to 165 (PGAQGAAAAGS) the composition is skewed to low complexity. S173 carries the phosphoserine modification. The residue at position 185 (K185) is an N6,N6,N6-trimethyllysine; by EHMT2; alternate. Position 185 is an N6,N6-dimethyllysine; by EHMT2; alternate (K185). Residues 198 to 216 (PEKRPPEIQHFRMSDDVHS) show a composition bias toward basic and acidic residues. Residues K219 and K229 each participate in a glycyl lysine isopeptide (Lys-Gly) (interchain with G-Cter in SUMO2) cross-link. S232, S242, and S246 each carry phosphoserine. Residues 280–291 (DERVDSDSKSEV) are compositionally biased toward basic and acidic residues. Acidic residues predominate over residues 298–327 (LSEEEEEEEEEEEEEEEEEEEEEEEEDEES). Residues 338-347 (GRRKAKKKWR) are compositionally biased toward basic residues. Phosphoserine is present on residues S350, S412, and S413. Positions 548–608 (IPRGDGVTPP…LADTIDSSGP (61 aa)) are disordered. T555 carries the post-translational modification Phosphothreonine. S569 carries the phosphoserine modification. K634 is covalently cross-linked (Glycyl lysine isopeptide (Lys-Gly) (interchain with G-Cter in SUMO2)). 7 ANK repeats span residues 649 to 678 (FHPR…DPNF), 684 to 713 (SKRT…NINA), 717 to 746 (QQRT…CVYS), 750 to 780 (DGST…DVNA), 784 to 813 (GGWT…DVTL), 817 to 846 (EENI…DLHA), and 850 to 879 (HGDT…NPEL). Positions 817–819 (EEN) are histone H3K9me binding. Residues 972-1035 (QHCTCVDDCS…NCKNRVVQSG (64 aa)) form the Pre-SET domain. Zn(2+)-binding residues include C974, C976, C980, C985, C987, C1017, C1021, C1023, and C1027. Positions 1038–1155 (VRLQLYRTAK…TGEELGFDYG (118 aa)) constitute an SET domain. S-adenosyl-L-methionine is bound by residues 1048-1050 (MGW), Y1085, and 1112-1113 (NH). Residues 1074–1093 (DAEADVREDDSYLFDLDNKD) are interaction with histone H3. C1115 is a binding site for Zn(2+). Residues 1154–1157 (YGDR) are interaction with histone H3. The region spanning 1164–1180 (KYFTCQCGSEKCKHSAE) is the Post-SET domain. C1168 serves as a coordination point for Zn(2+). Residue Q1169 participates in S-adenosyl-L-methionine binding. Zn(2+)-binding residues include C1170 and C1175. Position 1204 is a phosphoserine (S1204). T1210 carries the post-translational modification Phosphothreonine.

It belongs to the class V-like SAM-binding methyltransferase superfamily. Histone-lysine methyltransferase family. Suvar3-9 subfamily. As to quaternary structure, heterodimer; heterodimerizes with EHMT1/GLP. Interacts with GFI1B and WIZ. Part of the E2F6.com-1 complex in G0 phase composed of E2F6, MGA, MAX, TFDP1, CBX3, BAT8, EHMT1, RING1, RNF2, MBLR, L3MBTL2 and YAF2. Part of a complex composed of TRIM28, HDAC1, HDAC2 and EHMT2. Interacts with UHRF1. Interacts with CDYL. Interacts with REST only in the presence of CDYL. Part of a complex containing at least CDYL, REST, WIZ, SETB1, EHMT1 and EHMT2. Interacts with PRDM9 and CDYL; interaction only takes place when PRDM9 is bound to hotspot DNA. Interacts with SMYD5. In terms of processing, methylated at Lys-185; automethylated. As to expression, expressed in all tissues examined, with high levels in fetal liver, thymus, lymph node, spleen and peripheral blood leukocytes and lower level in bone marrow.

It is found in the nucleus. The protein localises to the chromosome. It catalyses the reaction N(6)-methyl-L-lysyl(9)-[histone H3] + S-adenosyl-L-methionine = N(6),N(6)-dimethyl-L-lysyl(9)-[histone H3] + S-adenosyl-L-homocysteine + H(+). The catalysed reaction is L-lysyl(9)-[histone H3] + S-adenosyl-L-methionine = N(6)-methyl-L-lysyl(9)-[histone H3] + S-adenosyl-L-homocysteine + H(+). Histone methyltransferase that specifically mono- and dimethylates 'Lys-9' of histone H3 (H3K9me1 and H3K9me2, respectively) in euchromatin. H3K9me represents a specific tag for epigenetic transcriptional repression by recruiting HP1 proteins to methylated histones. Also mediates monomethylation of 'Lys-56' of histone H3 (H3K56me1) in G1 phase, leading to promote interaction between histone H3 and PCNA and regulating DNA replication. Also weakly methylates 'Lys-27' of histone H3 (H3K27me). Also required for DNA methylation, the histone methyltransferase activity is not required for DNA methylation, suggesting that these 2 activities function independently. Probably targeted to histone H3 by different DNA-binding proteins like E2F6, MGA, MAX and/or DP1. May also methylate histone H1. In addition to the histone methyltransferase activity, also methylates non-histone proteins: mediates dimethylation of 'Lys-373' of p53/TP53. Also methylates CDYL, WIZ, ACIN1, DNMT1, HDAC1, ERCC6, KLF12 and itself. In Homo sapiens (Human), this protein is Histone-lysine N-methyltransferase EHMT2 (EHMT2).